The chain runs to 466 residues: Ceramide glucosyltransferase 1 (466 aa).

Residues 70–90 (LALSGCIFVSVLYLVHIIAFF) form a helical membrane-spanning segment. Asp148 is a short sequence motif (D1). Asp200 is a short sequence motif (D2). Position 294 (Asp294) is a short sequence motif, D3. Asp294 serves as the catalytic Proton acceptor. The (Q/R)XXRW motif lies at 330–334 (RIGRW). 2 consecutive transmembrane segments (helical) span residues 354–374 (CVTS…YSVY) and 403–423 (TPFL…FIFI).

The protein belongs to the glycosyltransferase 2 family. In terms of tissue distribution, expressed in excretory canals, pharyngeal intestinal valve, intestine and intestinal rectal valve.

Its subcellular location is the membrane. The catalysed reaction is an N-acylsphing-4-enine + UDP-alpha-D-glucose = a beta-D-glucosyl-(1&lt;-&gt;1')-N-acylsphing-4-enine + UDP + H(+). The enzyme catalyses an N-acyl-15-methylhexadecasphing-4-enine + UDP-alpha-D-glucose = an N-acyl-1-beta-D-glucosyl-15-methylhexadecasphing-4-enine + UDP + H(+). It functions in the pathway lipid metabolism; sphingolipid metabolism. In terms of biological role, catalyzes the first glycosylation step in glycosphingolipid biosynthesis, the transfer of glucose to ceramide to produce glucosylceramides (GlcCer). GlcCer are known to contribute to the physical properties and physiological functions of membranes and may regulate signal transduction. Only branched-chain sphingoid bases like 15-methylhexadecasphing-4-enine are used for generating complex sphingolipids in Caenorhabditis elegans. Together with cgt-3, plays a role in the trafficking of proteins such as mig-14 to the cell membrane in intestinal cells. The chain is Ceramide glucosyltransferase 1 from Caenorhabditis elegans.